Consider the following 208-residue polypeptide: V-type ATP synthase subunit D (208 aa).

This sequence belongs to the V-ATPase D subunit family.

Produces ATP from ADP in the presence of a proton gradient across the membrane. This chain is V-type ATP synthase subunit D, found in Chlamydia felis (strain Fe/C-56) (Chlamydophila felis).